We begin with the raw amino-acid sequence, 780 residues long: Copper-exporting P-type ATPase (780 aa).

Residues 2–67 form the HMA domain; it reads QRIQLNITGM…AVRRAALCTD (66 aa). Residues Cys-13 and Cys-16 each contribute to the Cu(+) site. A run of 6 helical transmembrane segments spans residues 89-109, 114-134, 153-173, 185-205, 348-368, and 374-394; these read LAVAAALFVPLAHLSVMFAVL, FPGWEWMLTALAIPVVTWAAW, TLISTGITAATIWSLYTVFGH, ALLGSDAIYFEVAAGITVFVL, VFVPCVFAVAALTAVGWLIAG, and VFSAAIAVLVIACPCALGLAT. Asp-430 acts as the 4-aspartylphosphate intermediate in catalysis. A run of 2 helical transmembrane segments spans residues 680–698 and 704–722; these read FNMVWAFGYNIAAIPIAAA and LVAGAAMAFSSFFVVSNSL.

The protein belongs to the cation transport ATPase (P-type) (TC 3.A.3) family. Type IB subfamily.

The protein resides in the cell membrane. The catalysed reaction is Cu(+)(in) + ATP + H2O = Cu(+)(out) + ADP + phosphate + H(+). Its function is as follows. Involved in copper export. This is Copper-exporting P-type ATPase (ctpA) from Mycobacterium leprae (strain TN).